The sequence spans 291 residues: Ribosomal RNA small subunit methyltransferase H (291 aa).

Residues 25 to 27, Asp-45, Phe-73, Asp-88, and Gln-95 contribute to the S-adenosyl-L-methionine site; that span reads GGH.

The protein belongs to the methyltransferase superfamily. RsmH family.

The protein resides in the cytoplasm. It catalyses the reaction cytidine(1402) in 16S rRNA + S-adenosyl-L-methionine = N(4)-methylcytidine(1402) in 16S rRNA + S-adenosyl-L-homocysteine + H(+). Its function is as follows. Specifically methylates the N4 position of cytidine in position 1402 (C1402) of 16S rRNA. The polypeptide is Ribosomal RNA small subunit methyltransferase H (Flavobacterium psychrophilum (strain ATCC 49511 / DSM 21280 / CIP 103535 / JIP02/86)).